Consider the following 140-residue polypeptide: uncharacterized protein (140 aa).

The disordered stretch occupies residues 62–140 (TEARAGRGGP…PQGRWGPSLG (79 aa)). The segment covering 71–94 (PATARSRVSADSQGGRAGSSSPSS) has biased composition (low complexity).

This is an uncharacterized protein from Homo sapiens (Human).